Here is a 198-residue protein sequence, read N- to C-terminus: Probable nicotinate-nucleotide adenylyltransferase (198 aa).

Belongs to the NadD family.

The catalysed reaction is nicotinate beta-D-ribonucleotide + ATP + H(+) = deamido-NAD(+) + diphosphate. Its pathway is cofactor biosynthesis; NAD(+) biosynthesis; deamido-NAD(+) from nicotinate D-ribonucleotide: step 1/1. Its function is as follows. Catalyzes the reversible adenylation of nicotinate mononucleotide (NaMN) to nicotinic acid adenine dinucleotide (NaAD). The polypeptide is Probable nicotinate-nucleotide adenylyltransferase (Chlorobium phaeobacteroides (strain BS1)).